Consider the following 315-residue polypeptide: tRNA dimethylallyltransferase (315 aa).

10–17 (GPTATGKS) contacts ATP. 12 to 17 (TATGKS) contributes to the substrate binding site. The interaction with substrate tRNA stretch occupies residues 35 to 38 (DSMQ).

The protein belongs to the IPP transferase family. Monomer. Mg(2+) serves as cofactor.

The catalysed reaction is adenosine(37) in tRNA + dimethylallyl diphosphate = N(6)-dimethylallyladenosine(37) in tRNA + diphosphate. In terms of biological role, catalyzes the transfer of a dimethylallyl group onto the adenine at position 37 in tRNAs that read codons beginning with uridine, leading to the formation of N6-(dimethylallyl)adenosine (i(6)A). This chain is tRNA dimethylallyltransferase, found in Caldanaerobacter subterraneus subsp. tengcongensis (strain DSM 15242 / JCM 11007 / NBRC 100824 / MB4) (Thermoanaerobacter tengcongensis).